The primary structure comprises 35 residues: Conotoxin Cal6.1c (35 aa).

A propeptide spanning residues 1–35 (GLNRPSKRCLAGSAPCEFHKRSTCCSGHCIIWWCA) is cleaved from the precursor. Cystine bridges form between C9-C25, C16-C29, and C24-C34.

The protein belongs to the conotoxin O1 superfamily. In terms of tissue distribution, expressed by the venom duct.

Its subcellular location is the secreted. Functionally, probable neurotoxin with unknown target. Possibly targets ion channels. This chain is Conotoxin Cal6.1c, found in Californiconus californicus (California cone).